A 205-amino-acid polypeptide reads, in one-letter code: Guanylate kinase (205 aa).

The 179-residue stretch at 17-195 (PRLTVLSGPS…VSRELLALML (179 aa)) folds into the Guanylate kinase-like domain. 24-31 (GPSGVGKS) is an ATP binding site.

Belongs to the guanylate kinase family.

It is found in the cytoplasm. It catalyses the reaction GMP + ATP = GDP + ADP. In terms of biological role, essential for recycling GMP and indirectly, cGMP. The polypeptide is Guanylate kinase (Streptomyces kasugaensis).